A 669-amino-acid chain; its full sequence is UvrABC system protein B (669 aa).

Positions 26–183 (TNFHAGIAKQ…RHLTELQYTR (158 aa)) constitute a Helicase ATP-binding domain. ATP is bound at residue 39-46 (GVTGSGKT). Positions 92–115 (YYDYYQPEAYVPASDTFIEKDSSI) match the Beta-hairpin motif. In terms of domain architecture, Helicase C-terminal spans 431–597 (QVDDLISQIN…SVVRPISDIL (167 aa)). The region spanning 631–666 (AAQMKVLEQKMYQHARDLEFEDAARIRDQIQRLREA) is the UVR domain.

The protein belongs to the UvrB family. As to quaternary structure, forms a heterotetramer with UvrA during the search for lesions. Interacts with UvrC in an incision complex.

It localises to the cytoplasm. The UvrABC repair system catalyzes the recognition and processing of DNA lesions. A damage recognition complex composed of 2 UvrA and 2 UvrB subunits scans DNA for abnormalities. Upon binding of the UvrA(2)B(2) complex to a putative damaged site, the DNA wraps around one UvrB monomer. DNA wrap is dependent on ATP binding by UvrB and probably causes local melting of the DNA helix, facilitating insertion of UvrB beta-hairpin between the DNA strands. Then UvrB probes one DNA strand for the presence of a lesion. If a lesion is found the UvrA subunits dissociate and the UvrB-DNA preincision complex is formed. This complex is subsequently bound by UvrC and the second UvrB is released. If no lesion is found, the DNA wraps around the other UvrB subunit that will check the other stand for damage. The polypeptide is UvrABC system protein B (Xylella fastidiosa (strain M23)).